A 154-amino-acid chain; its full sequence is Snaclec EMS16 subunit beta (154 aa).

The first 26 residues, 1–26 (MGRLISVRFSLLVVFLSLSGIGAGLC), serve as a signal peptide directing secretion. Cys27 and Cys38 form a disulfide bridge. Residues 34 to 147 (FDQHCYKVFE…CEKSVSFVCK (114 aa)) form the C-type lectin domain. N-linked (GlcNAc...) asparagine glycosylation occurs at Asn47. 2 disulfides stabilise this stretch: Cys55/Cys146 and Cys121/Cys138.

This sequence belongs to the snaclec family. As to quaternary structure, heterodimer of subunits A and B; disulfide-linked. In terms of tissue distribution, expressed by the venom gland.

It is found in the secreted. EMS16 is a potent and selective inhibitor of alpha-2/beta-1 (ITGA2/ITGB1) integrin and acts as a potent antagonist of platelet aggregation and cell migration. Binds specifically to the I domain of the alpha-2 subunit, in a metal ion-independent fashion. The sequence is that of Snaclec EMS16 subunit beta from Echis multisquamatus (Central Asian sand viper).